Here is a 186-residue protein sequence, read N- to C-terminus: Small ribosomal subunit protein uS4 (186 aa).

The S4 RNA-binding domain maps to 106 to 170 (RRLQTIVYRK…SPLKDEDHPI (65 aa)). The disordered stretch occupies residues 151–186 (EEEEVDYSPYSPLKDEDHPIRCEARGESPEETAAEE). The span at 163–178 (LKDEDHPIRCEARGES) shows a compositional bias: basic and acidic residues.

This sequence belongs to the universal ribosomal protein uS4 family. Part of the 30S ribosomal subunit. Contacts protein S5. The interaction surface between S4 and S5 is involved in control of translational fidelity.

In terms of biological role, one of the primary rRNA binding proteins, it binds directly to 16S rRNA where it nucleates assembly of the body of the 30S subunit. With S5 and S12 plays an important role in translational accuracy. The chain is Small ribosomal subunit protein uS4 from Methanopyrus kandleri (strain AV19 / DSM 6324 / JCM 9639 / NBRC 100938).